Here is a 217-residue protein sequence, read N- to C-terminus: Thymidylate kinase (217 aa).

16–23 (GIDGAGKT) is a binding site for ATP.

This sequence belongs to the thymidylate kinase family.

It catalyses the reaction dTMP + ATP = dTDP + ADP. In terms of biological role, phosphorylation of dTMP to form dTDP in both de novo and salvage pathways of dTTP synthesis. The sequence is that of Thymidylate kinase from Xylella fastidiosa (strain M23).